The following is a 283-amino-acid chain: Xyloglucan endotransglucosylase/hydrolase 2 (283 aa).

Residues 1–30 (MAPSSAHNNGFYVLMLVGIVVSTMVATCAG) form the signal peptide. The 190-residue stretch at 31–220 (SFYQDFDLTW…WSKAPFTAYY (190 aa)) folds into the GH16 domain. The active-site Nucleophile is the E106. The active-site Proton donor is E110. E110 contributes to the xyloglucan binding site. An N-linked (GlcNAc...) asparagine glycan is attached at N114. Residues 123–125 (HTN), 133–135 (NRE), 199–200 (DW), G204, and R272 each bind xyloglucan. Residues C267 and C281 are joined by a disulfide bond.

The protein belongs to the glycosyl hydrolase 16 family. Contains at least one intrachain disulfide bond essential for its enzymatic activity. In terms of processing, N-glycosylated; not essential for its enzymatic activity.

Its subcellular location is the secreted. The protein resides in the cell wall. It localises to the extracellular space. It is found in the apoplast. It carries out the reaction breaks a beta-(1-&gt;4) bond in the backbone of a xyloglucan and transfers the xyloglucanyl segment on to O-4 of the non-reducing terminal glucose residue of an acceptor, which can be a xyloglucan or an oligosaccharide of xyloglucan.. Functionally, catalyzes xyloglucan endohydrolysis (XEH) and/or endotransglycosylation (XET). Cleaves and religates xyloglucan polymers, an essential constituent of the primary cell wall, and thereby participates in cell wall construction of growing tissues. The sequence is that of Xyloglucan endotransglucosylase/hydrolase 2 from Glycine max (Soybean).